A 100-amino-acid polypeptide reads, in one-letter code: Large ribosomal subunit protein uL23 (100 aa).

Belongs to the universal ribosomal protein uL23 family. As to quaternary structure, part of the 50S ribosomal subunit. Contacts protein L29, and trigger factor when it is bound to the ribosome.

One of the early assembly proteins it binds 23S rRNA. One of the proteins that surrounds the polypeptide exit tunnel on the outside of the ribosome. Forms the main docking site for trigger factor binding to the ribosome. This chain is Large ribosomal subunit protein uL23, found in Buchnera aphidicola subsp. Schizaphis graminum (strain Sg).